The following is a 127-amino-acid chain: Protein ApaG (127 aa).

Residues 3–127 (KSETYRIEVE…FMLAMPRVLH (125 aa)) form the ApaG domain.

The protein is Protein ApaG of Azoarcus sp. (strain BH72).